Here is a 122-residue protein sequence, read N- to C-terminus: uncharacterized protein (122 aa).

2 helical membrane-spanning segments follow: residues 34–54 (IIFL…GVLV) and 91–111 (FVLA…FVSF).

The protein resides in the cell membrane. This is an uncharacterized protein from Mycoplasma pneumoniae (strain ATCC 29342 / M129 / Subtype 1) (Mycoplasmoides pneumoniae).